Here is a 332-residue protein sequence, read N- to C-terminus: Eukaryotic translation initiation factor 3 subunit I (332 aa).

WD repeat units follow at residues 8-47 (GHER…GTYH), 48-87 (GHQG…LLHT), 144-182 (DESK…LLSS), and 279-318 (GHFG…FDFM).

Belongs to the eIF-3 subunit I family. As to quaternary structure, component of the eukaryotic translation initiation factor 3 (eIF-3) complex.

The protein resides in the cytoplasm. Component of the eukaryotic translation initiation factor 3 (eIF-3) complex, which is involved in protein synthesis of a specialized repertoire of mRNAs and, together with other initiation factors, stimulates binding of mRNA and methionyl-tRNAi to the 40S ribosome. The eIF-3 complex specifically targets and initiates translation of a subset of mRNAs involved in cell proliferation. This Phaeosphaeria nodorum (strain SN15 / ATCC MYA-4574 / FGSC 10173) (Glume blotch fungus) protein is Eukaryotic translation initiation factor 3 subunit I.